The sequence spans 145 residues: Protein phosphatase 1 regulatory subunit 14D (145 aa).

Over residues 1–14 (MLSSSPASCTSPSP) the composition is skewed to low complexity. The tract at residues 1-59 (MLSSSPASCTSPSPDGENPCKKVHWASGRRRTSSTDSESKSHPDSSKIPRSRRPSRLTV) is disordered. Residues 21–25 (KKVHW) are interaction with protein phosphatase 1. A compositionally biased stretch (basic residues) spans 21–32 (KKVHWASGRRRT). A compositionally biased stretch (basic and acidic residues) spans 37-47 (SESKSHPDSSK). The residue at position 58 (threonine 58) is a Phosphothreonine.

Belongs to the PP1 inhibitor family. Phosphorylated on several residues. As to expression, detected in colon, intestine, kidney and brain cortex.

It localises to the cytoplasm. Its function is as follows. Inhibitor of PPP1CA. Has inhibitory activity only when phosphorylated, creating a molecular switch for regulating the phosphorylation status of PPP1CA substrates and smooth muscle contraction. This Homo sapiens (Human) protein is Protein phosphatase 1 regulatory subunit 14D (PPP1R14D).